Here is a 518-residue protein sequence, read N- to C-terminus: Cytochrome P450 1A1 (518 aa).

The interval 33-44 (SKPRVPKGLKRL) is mitochondrial targeting signal. O-linked (GlcNAc) serine glycosylation is present at S71. Position 228 (F228) interacts with substrate. Residue C461 coordinates heme.

This sequence belongs to the cytochrome P450 family. Interacts with cytosolic chaperones HSP70 and HSP90; this interaction is required for initial targeting to mitochondria. Interacts (via mitochondrial targeting signal) with TOMM40 (via N-terminus); this interaction is required for translocation across the mitochondrial outer membrane. Requires heme as cofactor.

Its subcellular location is the endoplasmic reticulum membrane. It is found in the mitochondrion inner membrane. It localises to the microsome membrane. The protein localises to the cytoplasm. The enzyme catalyses an organic molecule + reduced [NADPH--hemoprotein reductase] + O2 = an alcohol + oxidized [NADPH--hemoprotein reductase] + H2O + H(+). It catalyses the reaction estrone + reduced [NADPH--hemoprotein reductase] + O2 = 2-hydroxyestrone + oxidized [NADPH--hemoprotein reductase] + H2O + H(+). It carries out the reaction estrone + reduced [NADPH--hemoprotein reductase] + O2 = 4-hydroxyestrone + oxidized [NADPH--hemoprotein reductase] + H2O + H(+). The catalysed reaction is estrone + reduced [NADPH--hemoprotein reductase] + O2 = 6alpha-hydroxyestrone + oxidized [NADPH--hemoprotein reductase] + H2O + H(+). The enzyme catalyses estrone + reduced [NADPH--hemoprotein reductase] + O2 = 15alpha-hydroxyestrone + oxidized [NADPH--hemoprotein reductase] + H2O + H(+). It catalyses the reaction estrone + reduced [NADPH--hemoprotein reductase] + O2 = 16alpha-hydroxyestrone + oxidized [NADPH--hemoprotein reductase] + H2O + H(+). It carries out the reaction 17beta-estradiol + reduced [NADPH--hemoprotein reductase] + O2 = 2-hydroxy-17beta-estradiol + oxidized [NADPH--hemoprotein reductase] + H2O + H(+). The catalysed reaction is 17beta-estradiol + reduced [NADPH--hemoprotein reductase] + O2 = 4-hydroxy-17beta-estradiol + oxidized [NADPH--hemoprotein reductase] + H2O + H(+). The enzyme catalyses 17beta-estradiol + reduced [NADPH--hemoprotein reductase] + O2 = 6alpha-hydroxy-17beta-estradiol + oxidized [NADPH--hemoprotein reductase] + H2O + H(+). It catalyses the reaction 17beta-estradiol + reduced [NADPH--hemoprotein reductase] + O2 = 7alpha-hydroxy-17beta-estradiol + oxidized [NADPH--hemoprotein reductase] + H2O + H(+). It carries out the reaction 17beta-estradiol + reduced [NADPH--hemoprotein reductase] + O2 = 15alpha-hydroxy-17beta-estradiol + oxidized [NADPH--hemoprotein reductase] + H2O + H(+). The catalysed reaction is (5Z,8Z,11Z)-eicosatrienoate + reduced [NADPH--hemoprotein reductase] + O2 = 19-hydroxy-(5Z,8Z,11Z)-eicosatrienoate + oxidized [NADPH--hemoprotein reductase] + H2O + H(+). The enzyme catalyses (5Z,8Z,11Z,14Z)-eicosatetraenoate + reduced [NADPH--hemoprotein reductase] + O2 = 16-hydroxy-(5Z,8Z,11Z,14Z)-eicosatetraenoate + oxidized [NADPH--hemoprotein reductase] + H2O + H(+). It catalyses the reaction (5Z,8Z,11Z,14Z)-eicosatetraenoate + reduced [NADPH--hemoprotein reductase] + O2 = 17-hydroxy-(5Z,8Z,11Z,14Z)-eicosatetraenoate + oxidized [NADPH--hemoprotein reductase] + H2O + H(+). It carries out the reaction (5Z,8Z,11Z,14Z)-eicosatetraenoate + reduced [NADPH--hemoprotein reductase] + O2 = 18-hydroxy-(5Z,8Z,11Z,14Z)-eicosatetraenoate + oxidized [NADPH--hemoprotein reductase] + H2O + H(+). The catalysed reaction is (5Z,8Z,11Z,14Z)-eicosatetraenoate + reduced [NADPH--hemoprotein reductase] + O2 = 19-hydroxy-(5Z,8Z,11Z,14Z)-eicosatetraenoate + oxidized [NADPH--hemoprotein reductase] + H2O + H(+). The enzyme catalyses (5Z,8Z,11Z,14Z,17Z)-eicosapentaenoate + reduced [NADPH--hemoprotein reductase] + O2 = 19-hydroxy-(5Z,8Z,11Z,14Z,17Z)-eicosapentaenoate + oxidized [NADPH--hemoprotein reductase] + H2O + H(+). It catalyses the reaction (5Z,8Z,11Z,14Z)-eicosatetraenoate + reduced [NADPH--hemoprotein reductase] + O2 = (8R,9S)-epoxy-(5Z,11Z,14Z)-eicosatrienoate + oxidized [NADPH--hemoprotein reductase] + H2O + H(+). It carries out the reaction (5Z,8Z,11Z,14Z)-eicosatetraenoate + reduced [NADPH--hemoprotein reductase] + O2 = (11R,12S)-epoxy-(5Z,8Z,14Z)-eicosatrienoate + oxidized [NADPH--hemoprotein reductase] + H2O + H(+). The catalysed reaction is (5Z,8Z,11Z,14Z)-eicosatetraenoate + reduced [NADPH--hemoprotein reductase] + O2 = (14S,15R)-epoxy-(5Z,8Z,11Z)-eicosatrienoate + oxidized [NADPH--hemoprotein reductase] + H2O + H(+). The enzyme catalyses (5Z,8Z,11Z,14Z)-eicosatetraenoate + reduced [NADPH--hemoprotein reductase] + O2 = (14R,15S)-epoxy-(5Z,8Z,11Z)-eicosatrienoate + oxidized [NADPH--hemoprotein reductase] + H2O + H(+). It catalyses the reaction (5Z,8Z,11Z,14Z,17Z)-eicosapentaenoate + reduced [NADPH--hemoprotein reductase] + O2 = (17R,18S)-epoxy-(5Z,8Z,11Z,14Z)-eicosatetraenoate + oxidized [NADPH--hemoprotein reductase] + H2O + H(+). It carries out the reaction (4Z,7Z,10Z,13Z,16Z,19Z)-docosahexaenoate + reduced [NADPH--hemoprotein reductase] + O2 = (19S,20R)-epoxy-(4Z,7Z,10Z,13Z,16Z)-docosapentaenoate + oxidized [NADPH--hemoprotein reductase] + H2O + H(+). The catalysed reaction is (4Z,7Z,10Z,13Z,16Z,19Z)-docosahexaenoate + reduced [NADPH--hemoprotein reductase] + O2 = (19R,20S)-epoxy-(4Z,7Z,10Z,13Z,16Z)-docosapentaenoate + oxidized [NADPH--hemoprotein reductase] + H2O + H(+). The enzyme catalyses all-trans-retinol + reduced [NADPH--hemoprotein reductase] + O2 = all-trans-retinal + oxidized [NADPH--hemoprotein reductase] + 2 H2O + H(+). It catalyses the reaction all-trans-retinal + reduced [NADPH--hemoprotein reductase] + O2 = all-trans-retinoate + oxidized [NADPH--hemoprotein reductase] + H2O + 2 H(+). It carries out the reaction (13S)-hydroperoxy-(9Z,11E)-octadecadienoate = 13-oxo-(9Z,11E)-octadecadienoate + H2O. The catalysed reaction is (12S)-hydroperoxy-(5Z,8Z,10E,14Z)-eicosatetraenoate = 12-oxo-(5Z,8Z,10E,14Z)-eicosatetraenoate + H2O. The enzyme catalyses (15S)-hydroperoxy-(5Z,8Z,11Z,13E)-eicosatetraenoate = 15-oxo-(5Z,8Z,11Z,13E)-eicosatetraenoate + H2O. It catalyses the reaction (5S)-hydroperoxy-(6E,8Z,11Z,14Z)-eicosatetraenoate = 5-oxo-(6E,8Z,11Z,14Z)-eicosatetraenoate + H2O. The protein operates within steroid hormone biosynthesis. Its pathway is lipid metabolism; fatty acid metabolism. It participates in cofactor metabolism; retinol metabolism. A cytochrome P450 monooxygenase involved in the metabolism of various endogenous substrates, including fatty acids, steroid hormones and vitamins. Mechanistically, uses molecular oxygen inserting one oxygen atom into a substrate, and reducing the second into a water molecule, with two electrons provided by NADPH via cytochrome P450 reductase (CPR; NADPH-ferrihemoprotein reductase). Catalyzes the hydroxylation of carbon-hydrogen bonds. Exhibits high catalytic activity for the formation of hydroxyestrogens from estrone (E1) and 17beta-estradiol (E2), namely 2-hydroxy E1 and E2, as well as D-ring hydroxylated E1 and E2 at the C15alpha and C16alpha positions. Displays different regioselectivities for polyunsaturated fatty acids (PUFA) hydroxylation. Catalyzes the epoxidation of double bonds of certain PUFA. Converts arachidonic acid toward epoxyeicosatrienoic acid (EET) regioisomers, 8,9-, 11,12-, and 14,15-EET, that function as lipid mediators in the vascular system. Displays an absolute stereoselectivity in the epoxidation of eicosapentaenoic acid (EPA) producing the 17(R),18(S) enantiomer. May play an important role in all-trans retinoic acid biosynthesis in extrahepatic tissues. Catalyzes two successive oxidative transformation of all-trans retinol to all-trans retinal and then to the active form all-trans retinoic acid. May also participate in eicosanoids metabolism by converting hydroperoxide species into oxo metabolites (lipoxygenase-like reaction, NADPH-independent). The protein is Cytochrome P450 1A1 (CYP1A1) of Oryctolagus cuniculus (Rabbit).